Here is a 491-residue protein sequence, read N- to C-terminus: MANYFNTLNLRQQLAQLGKCRFMGRDEFADGASYLQGKKVVIVGCGAQGLNQGLNMRDSGLDISYALRKEAIAEKRASWRKATENGFKVGTYEELIPQADLVVNLTPDKQHSDVVRTVQPLMKDGAALGYSHGFNIVEVGEQIRKDITVVMVAPKCPGTEVREEYKRGFGVPTLIAVHPENDPKGEGMAIAKAWAAATGGHRAGVLESSFVAEVKSDLMGEQTILCGMLQAGSLLCFDKLVEEGTDPAYAEKLIQFGWETITEALKQGGITLMMDRLSNPAKLRAYALSEQLKEIMAPLFQKHMDDIISGEFSSGMMADWANDDKKLLTWREETGKTAFETAPQYEGKIGEQEYFDKGVLMIAMVKAGVELAFETMVDSGIIEESAYYESLHELPLIANTIARKRLYEMNVVISDTAEYGNYLFSYACVPLLKPFMAELQPGDLGKAIPEGAVDNAQLRDVNEAIRSHAIEQVGKKLRGYMTDMKRIAVAG.

The KARI N-terminal Rossmann domain occupies 15-208 (AQLGKCRFMG…GGHRAGVLES (194 aa)). NADP(+) contacts are provided by residues 45-48 (CGAQ), R68, R76, S78, and 108-110 (DKQ). Residue H132 is part of the active site. G158 contacts NADP(+). KARI C-terminal knotted domains lie at 209-344 (SFVA…TAPQ) and 345-484 (YEGK…MTDM). Positions 217, 221, 389, and 393 each coordinate Mg(2+). S414 lines the substrate pocket.

Belongs to the ketol-acid reductoisomerase family. Mg(2+) is required as a cofactor.

The catalysed reaction is (2R)-2,3-dihydroxy-3-methylbutanoate + NADP(+) = (2S)-2-acetolactate + NADPH + H(+). The enzyme catalyses (2R,3R)-2,3-dihydroxy-3-methylpentanoate + NADP(+) = (S)-2-ethyl-2-hydroxy-3-oxobutanoate + NADPH + H(+). The protein operates within amino-acid biosynthesis; L-isoleucine biosynthesis; L-isoleucine from 2-oxobutanoate: step 2/4. It participates in amino-acid biosynthesis; L-valine biosynthesis; L-valine from pyruvate: step 2/4. Its function is as follows. Involved in the biosynthesis of branched-chain amino acids (BCAA). Catalyzes an alkyl-migration followed by a ketol-acid reduction of (S)-2-acetolactate (S2AL) to yield (R)-2,3-dihydroxy-isovalerate. In the isomerase reaction, S2AL is rearranged via a Mg-dependent methyl migration to produce 3-hydroxy-3-methyl-2-ketobutyrate (HMKB). In the reductase reaction, this 2-ketoacid undergoes a metal-dependent reduction by NADPH to yield (R)-2,3-dihydroxy-isovalerate. The chain is Ketol-acid reductoisomerase (NADP(+)) from Escherichia coli O6:K15:H31 (strain 536 / UPEC).